The primary structure comprises 456 residues: MPYIPHTPNDTKEMLEAIGAQDIQDLFDEIPASLQYAGFQNIPAGINEMEMLKEAQNQAQKNRNGICFIGAGCYEHHIPAAVWDIASRGEFLTAYTPYQAEASQGTLQLLYEYQTMICELTGMEVSNASMYDGATALAEAVLMAVRLNKHSKTNRVLIAGTVHPFYRETIETIVRNQHIEVITLPFDEQQGITDLGSLNQYTGEDITALVIAQPNFFGCLEQVDKMTSWAHHNKTISVACVNPTSLALLKPPGSWGEHGVDIVCGEGQPLGSPMASGGPYFGFLSTRMAHVRQMPGRIIGRTVDKDGKTGFSLTLQAREQHIRRAKATSNICTNQGLLVTAATIYMSLLGPEGLSQVATQCHQNTHELITALTQIEGVELAFKAPFFHEALIKLNQPVQYVLQQLADAGIAGGYAPEQHYPQLANTLLVCATEVRTAEDIAKYAKTLKTIMSKRGA.

This sequence belongs to the GcvP family. N-terminal subunit subfamily. The glycine cleavage system is composed of four proteins: P, T, L and H. In this organism, the P 'protein' is a heterodimer of two subunits.

It catalyses the reaction N(6)-[(R)-lipoyl]-L-lysyl-[glycine-cleavage complex H protein] + glycine + H(+) = N(6)-[(R)-S(8)-aminomethyldihydrolipoyl]-L-lysyl-[glycine-cleavage complex H protein] + CO2. In terms of biological role, the glycine cleavage system catalyzes the degradation of glycine. The P protein binds the alpha-amino group of glycine through its pyridoxal phosphate cofactor; CO(2) is released and the remaining methylamine moiety is then transferred to the lipoamide cofactor of the H protein. The polypeptide is Probable glycine dehydrogenase (decarboxylating) subunit 1 (Legionella pneumophila (strain Corby)).